Consider the following 86-residue polypeptide: Sugar transporter SemiSWEET (86 aa).

Helical transmembrane passes span 3–23 (PFLI…AYAP), 37–57 (ISLG…IYGL), and 61–81 (DAPL…ILVM). The region spanning 6–63 (IKLIGFAAATCTTVAYAPQFIKVLKTRSARDISLGMFLVMVLGLALWLIYGLLSGDAP) is the PQ-loop domain.

In terms of assembly, homodimer. Homooligomer.

It localises to the cell membrane. In terms of biological role, mediates sucrose transmembrane transport down a concentration gradient. The protein is Sugar transporter SemiSWEET of Bradyrhizobium diazoefficiens (strain JCM 10833 / BCRC 13528 / IAM 13628 / NBRC 14792 / USDA 110).